Consider the following 110-residue polypeptide: Keratin, type I cytoskeletal 19 (110 aa).

The tract at residues 1-8 (FGSGGVFR) is head. Ser3 bears the Phosphoserine mark. The region spanning 7-110 (FRITMQNLND…KLEQEIATYR (104 aa)) is the IF rod domain. Arg8 carries the omega-N-methylarginine modification. The segment at 9–42 (ITMQNLNDRLASYLDKVRALEQANGELEVKIRDW) is coil 1A. Residues 43–45 (YQK) are linker 1. The interval 46–83 (IVLQIDNARTKFETEQALRVLDELTLARKNHEEEISAL) is coil 1B. The coil 2 stretch occupies residues 85-110 (ADTERQNQEYQQLMDIKLEQEIATYR). The necessary for interaction with PNN stretch occupies residues 85-110 (ADTERQNQEYQQLMDIKLEQEIATYR).

The protein belongs to the intermediate filament family. Heterotetramer of two type I and two type II keratins. Interacts with PNN and the actin-binding domain of DMD.

Functionally, involved in the organization of myofibers. Together with KRT8, helps to link the contractile apparatus to dystrophin at the costameres of striated muscle. This Mesocricetus auratus (Golden hamster) protein is Keratin, type I cytoskeletal 19.